We begin with the raw amino-acid sequence, 372 residues long: E3 ubiquitin-protein ligase RNF34 (372 aa).

The FYVE-type zinc finger occupies 56-107 (EGPNIVCKACGLSFSVFRKKHVCCDCKKDFCSVCSVLQENLRRCSTCHLLQE). In terms of domain architecture, SAP 1 spans 115–134 (LMRLKVKDLRQYLILRNIPT). A Phosphoserine modification is found at serine 169. Positions 194-252 (QGELMDGDQTSRSGVPAQVQSEITSANTEDDDDDDDEDDDDEEENAEDQNPGLSKERVR) are disordered. Positions 201–220 (DQTSRSGVPAQVQSEITSAN) are enriched in polar residues. The segment covering 221–240 (TEDDDDDDDEDDDDEEENAE) has biased composition (acidic residues). Phosphoserine occurs at positions 254 and 256. An SAP 2 domain is found at 264–278 (VEGMSVRQLKEILAR). The RING-type zinc finger occupies 325–360 (CRICMDAVIDCVLLECGHMVTCTKCGKRMSECPICR).

Interacts with CASP8 and CASP10. Interacts with p53/TP53; involved in p53/TP53 ubiquitination. Interacts (via RING-type zinc finger) with MDM2; the interaction stabilizes MDM2. Interacts (via RING-type zinc finger) with PPARGC1A. Interacts with NOD1. Autoubiquitinated (in vitro). In terms of processing, proteolytically cleaved by caspases upon induction of apoptosis by TNF.

Its subcellular location is the cell membrane. It localises to the endomembrane system. It is found in the nucleus. The protein localises to the nucleus speckle. The protein resides in the cytoplasm. Its subcellular location is the cytosol. The catalysed reaction is S-ubiquitinyl-[E2 ubiquitin-conjugating enzyme]-L-cysteine + [acceptor protein]-L-lysine = [E2 ubiquitin-conjugating enzyme]-L-cysteine + N(6)-ubiquitinyl-[acceptor protein]-L-lysine.. It functions in the pathway protein modification; protein ubiquitination. In terms of biological role, E3 ubiquitin-protein ligase that regulates several biological processes through the ubiquitin-mediated proteasomal degradation of various target proteins. Ubiquitinates the caspases CASP8 and CASP10, promoting their proteasomal degradation, to negatively regulate cell death downstream of death domain receptors in the extrinsic pathway of apoptosis. May mediate 'Lys-48'-linked polyubiquitination of RIPK1 and its subsequent proteasomal degradation thereby indirectly regulating the tumor necrosis factor-mediated signaling pathway. Negatively regulates p53/TP53 through its direct ubiquitination and targeting to proteasomal degradation. Indirectly, may also negatively regulate p53/TP53 through ubiquitination and degradation of SFN. Mediates PPARGC1A proteasomal degradation probably through ubiquitination thereby indirectly regulating the metabolism of brown fat cells. Possibly involved in innate immunity, through 'Lys-48'-linked polyubiquitination of NOD1 and its subsequent proteasomal degradation. The polypeptide is E3 ubiquitin-protein ligase RNF34 (RNF34) (Pongo abelii (Sumatran orangutan)).